Here is a 218-residue protein sequence, read N- to C-terminus: uncharacterized protein (218 aa).

The region spanning 4–207 (WKVAAAQYEP…SLLLVGQRSS (204 aa)) is the CN hydrolase domain.

This is an uncharacterized protein from Escherichia coli (strain K12).